Here is a 312-residue protein sequence, read N- to C-terminus: tRNA U34 carboxymethyltransferase (312 aa).

Carboxy-S-adenosyl-L-methionine is bound by residues Lys88, Trp102, Lys107, Gly127, Asp149–Ser151, Leu177–Asp178, Met191, Tyr195, and Arg304.

Belongs to the class I-like SAM-binding methyltransferase superfamily. CmoB family. As to quaternary structure, homotetramer.

The enzyme catalyses carboxy-S-adenosyl-L-methionine + 5-hydroxyuridine(34) in tRNA = 5-carboxymethoxyuridine(34) in tRNA + S-adenosyl-L-homocysteine + H(+). Its function is as follows. Catalyzes carboxymethyl transfer from carboxy-S-adenosyl-L-methionine (Cx-SAM) to 5-hydroxyuridine (ho5U) to form 5-carboxymethoxyuridine (cmo5U) at position 34 in tRNAs. In Dichelobacter nodosus (strain VCS1703A), this protein is tRNA U34 carboxymethyltransferase.